The sequence spans 1086 residues: Calcium-transporting ATPase 9, plasma membrane-type (1086 aa).

Residues 1-15 are compositionally biased toward low complexity; that stretch reads MSTSSSNGLLLTSMS. The segment at 1–50 is disordered; that stretch reads MSTSSSNGLLLTSMSGRHDDMEAGSAKTEEHSDHEELQHDPDDPFDIDNT. The Cytoplasmic portion of the chain corresponds to 1–194; that stretch reads MSTSSSNGLL…NTYPKKKGKN (194 aa). Basic and acidic residues predominate over residues 16–42; it reads GRHDDMEAGSAKTEEHSDHEELQHDPD. Positions 57 to 68 are interaction with calmodulin; it reads SLRRWRQAALVL. The helical transmembrane segment at 195–215 threads the bilayer; it reads FFMFLWEAWQDLTLIILIIAA. Over 216–233 the chain is Lumenal; that stretch reads VTSLALGIKTEGLKEGWL. Residues 234 to 254 traverse the membrane as a helical segment; the sequence is DGGSIAFAVLLVIVVTAVSDY. The Cytoplasmic portion of the chain corresponds to 255–382; that stretch reads RQSLQFQNLN…GEETPLQVRL (128 aa). A helical membrane pass occupies residues 383-402; that stretch reads NGLATFIGIVGLSVALVVLV. Over 403 to 439 the chain is Lumenal; the sequence is ALLVRYFTGTTQDTNGATQFIKGTTSISDIVDDCVKI. A helical transmembrane segment spans residues 440–457; sequence FTIAVTIVVVAVPEGLPL. Over 458–857 the chain is Cytoplasmic; the sequence is AVTLTLAYSM…RWGRSVYANI (400 aa). Asp495 (4-aspartylphosphate intermediate) is an active-site residue. Residues Asp802 and Asp806 each contribute to the Mg(2+) site. Residues 858-876 form a helical membrane-spanning segment; that stretch reads QKFIQFQLTVNVAALIINV. Over 877–887 the chain is Lumenal; the sequence is VAAMSSGDVPL. The chain crosses the membrane as a helical span at residues 888 to 908; it reads KAVQLLWVNLIMDTLGALALA. At 909–928 the chain is on the cytoplasmic side; it reads TEPPTDHLMHRTPVGRREPL. The chain crosses the membrane as a helical span at residues 929–951; it reads ITNIMWRNLLVQSFYQVAVLLVL. The Lumenal portion of the chain corresponds to 952–963; the sequence is NFAGLSILGLNH. A helical membrane pass occupies residues 964-988; that stretch reads ENHAHAVEVKNTMIFNAFVMCQIFN. Residues 989–1006 are Cytoplasmic-facing; it reads EFNARKPDEMNVFRGVNK. A helical transmembrane segment spans residues 1007–1028; sequence NPLFVAIVGVTFILQIIIVTFL. Residues 1029 to 1038 lie on the Lumenal side of the membrane; it reads GKFAHTVRLG. Residues 1039–1060 traverse the membrane as a helical segment; sequence WQLWLASIIIGLVSWPLAIVGK. Over 1061–1086 the chain is Cytoplasmic; sequence LIPVPKTPMSVYFKKPFRKYKASRNA.

The protein belongs to the cation transport ATPase (P-type) (TC 3.A.3) family. Type IIB subfamily.

It is found in the membrane. It catalyses the reaction Ca(2+)(in) + ATP + H2O = Ca(2+)(out) + ADP + phosphate + H(+). Its activity is regulated as follows. Activated by calmodulin. In terms of biological role, this magnesium-dependent enzyme catalyzes the hydrolysis of ATP coupled with the translocation of calcium from the cytosol out of the cell or into organelles. This chain is Calcium-transporting ATPase 9, plasma membrane-type (ACA9), found in Arabidopsis thaliana (Mouse-ear cress).